The following is a 159-amino-acid chain: Ribosomal RNA large subunit methyltransferase H (159 aa).

Residues L76, G108, and 127–132 (LSRLTF) each bind S-adenosyl-L-methionine.

This sequence belongs to the RNA methyltransferase RlmH family. In terms of assembly, homodimer.

The protein resides in the cytoplasm. The enzyme catalyses pseudouridine(1915) in 23S rRNA + S-adenosyl-L-methionine = N(3)-methylpseudouridine(1915) in 23S rRNA + S-adenosyl-L-homocysteine + H(+). Specifically methylates the pseudouridine at position 1915 (m3Psi1915) in 23S rRNA. The protein is Ribosomal RNA large subunit methyltransferase H of Syntrophomonas wolfei subsp. wolfei (strain DSM 2245B / Goettingen).